A 207-amino-acid chain; its full sequence is Large ribosomal subunit protein uL4 (207 aa).

The disordered stretch occupies residues 44–78 (MRQGTHKTKNRAEVSGGGRKPWRQKGTGRARQGSI).

Belongs to the universal ribosomal protein uL4 family. Part of the 50S ribosomal subunit.

Functionally, one of the primary rRNA binding proteins, this protein initially binds near the 5'-end of the 23S rRNA. It is important during the early stages of 50S assembly. It makes multiple contacts with different domains of the 23S rRNA in the assembled 50S subunit and ribosome. Its function is as follows. This protein when expressed in E.coli represses the endogenous S10 operon; this may not occur in B.stearothermophilus however. In terms of biological role, forms part of the polypeptide exit tunnel. The sequence is that of Large ribosomal subunit protein uL4 (rplD) from Geobacillus stearothermophilus (Bacillus stearothermophilus).